The primary structure comprises 62 residues: Defensin BmKDfsin6 (62 aa).

A signal peptide spans 1 to 24; it reads MKVIAILFLLAFVLCTMEITMVEA. Disulfide bonds link cysteine 28-cysteine 49, cysteine 35-cysteine 57, and cysteine 39-cysteine 59.

This sequence belongs to the invertebrate defensin family. Type 2 subfamily. Highly expressed in non-venom gland (hemolymph) and moderately expressed in venom gland.

It is found in the secreted. Its function is as follows. Antibacterial peptide active against Gram-positive bacteria, but not on Gram-negative bacteria. Also has weak blocking activity on Kv1.1/KCNA1, Kv1.2/KCNA2, Kv1.3/KCNA3, KCa3.1/KCNN4/IK, KCa2.3/KCNN3/SK3 and Kv11.1/KCNH2/ERG1 channels (tested at 1 uM). It inhibits potassium channel current by interacting with the pore region. This is Defensin BmKDfsin6 from Olivierus martensii (Manchurian scorpion).